The primary structure comprises 119 residues: Fluoride-specific ion channel FluC 2 (119 aa).

A run of 2 helical transmembrane segments spans residues 1–21 (MIFA…ALTS) and 44–64 (GAFF…YAFL). Na(+) contacts are provided by Gly70 and Thr73. Residues 98-118 (LLASYLGGAVLLTCGYYLGSL) form a helical membrane-spanning segment.

This sequence belongs to the fluoride channel Fluc/FEX (TC 1.A.43) family.

The protein resides in the cell membrane. The catalysed reaction is fluoride(in) = fluoride(out). Its activity is regulated as follows. Na(+) is not transported, but it plays an essential structural role and its presence is essential for fluoride channel function. In terms of biological role, fluoride-specific ion channel. Important for reducing fluoride concentration in the cell, thus reducing its toxicity. The chain is Fluoride-specific ion channel FluC 2 from Lactobacillus delbrueckii subsp. bulgaricus (strain ATCC 11842 / DSM 20081 / BCRC 10696 / JCM 1002 / NBRC 13953 / NCIMB 11778 / NCTC 12712 / WDCM 00102 / Lb 14).